The sequence spans 802 residues: Probable inactive leucine-rich repeat receptor-like protein kinase At3g03770 (802 aa).

Positions 1-26 (MEKLYCGMPLLLLVLLLASIDGSTQL) are cleaved as a signal peptide. Residues 27–391 (QSSQSQTLLR…RNKVSKVGIA (365 aa)) lie on the Extracellular side of the membrane. N-linked (GlcNAc...) asparagine glycosylation is found at asparagine 52 and asparagine 83. LRR repeat units follow at residues 71-94 (EDSVTQLHIIGDNGTHMLPKSFSI), 104-128 (LPDVKVLTFVSLGLWGWLPQKINRL), 129-152 (SSLEILNVSSNFLFGPIPHELSSL), 153-176 (ATLQTLILDENMFSGELPDWIDSL), 177-200 (PSLAVLSLRKNVLNGSLPSSLSSL), 201-225 (SGLRVLALANNRFNGALPDLSHLTN), 227-244 (QVLDLEGNSFGPLFPRLS), 245-268 (NKLVTLILSKNKFRSAVSAEEVSS), 269-293 (LYQLQHLDLSYNTFVGPFPTSLMSL), 294-317 (PAITYLNISHNKLTGRLSANLSCN), and 319-341 (QLMFVDMSSNLLTGSLPTCLKPS). A glycan (N-linked (GlcNAc...) asparagine) is linked at asparagine 135. Residue asparagine 190 is glycosylated (N-linked (GlcNAc...) asparagine). Residues asparagine 300 and asparagine 313 are each glycosylated (N-linked (GlcNAc...) asparagine). The helical transmembrane segment at 392 to 412 (LGVTASILGVLLLAGALFVVL) threads the bilayer. At 413-802 (RRLNAKKTVT…RDSGCEEHER (390 aa)) the chain is on the cytoplasmic side. One can recognise a Protein kinase domain in the interval 477-759 (FESSAFMGEG…FASQVQEGWL (283 aa)). The disordered stretch occupies residues 761–802 (NSNPSSNLGSPSPAASSLPPPSRLHVTTLESPRDSGCEEHER). The span at 762 to 777 (SNPSSNLGSPSPAASS) shows a compositional bias: low complexity. Basic and acidic residues predominate over residues 791 to 802 (SPRDSGCEEHER).

It belongs to the protein kinase superfamily. Ser/Thr protein kinase family.

Its subcellular location is the cell membrane. This is Probable inactive leucine-rich repeat receptor-like protein kinase At3g03770 from Arabidopsis thaliana (Mouse-ear cress).